A 308-amino-acid chain; its full sequence is D-alanine--D-alanine ligase (308 aa).

In terms of domain architecture, ATP-grasp spans 105–302 (KAIFRSLGLA…FPDLCDRILD (198 aa)). ATP is bound at residue 133-188 (DLPFGLPCVVKPAGEGSSVGVHLVNAAAELGPACRDAAGYAGDVIVERYVKGTEVD). Mg(2+) is bound by residues Asp256, Glu269, and Asn271.

It belongs to the D-alanine--D-alanine ligase family. The cofactor is Mg(2+). It depends on Mn(2+) as a cofactor.

Its subcellular location is the cytoplasm. The catalysed reaction is 2 D-alanine + ATP = D-alanyl-D-alanine + ADP + phosphate + H(+). Its pathway is cell wall biogenesis; peptidoglycan biosynthesis. In terms of biological role, cell wall formation. The polypeptide is D-alanine--D-alanine ligase (Anaeromyxobacter dehalogenans (strain 2CP-C)).